Reading from the N-terminus, the 438-residue chain is Cysteine--tRNA ligase (438 aa).

Zn(2+) is bound at residue Cys-28. Residues 30–40 (PTVYNHLHLGN) carry the 'HIGH' region motif. Zn(2+)-binding residues include Cys-207, His-232, and Glu-236. The 'KMSKS' region signature appears at 264–268 (KMSKS). Lys-267 lines the ATP pocket.

It belongs to the class-I aminoacyl-tRNA synthetase family. In terms of assembly, monomer. The cofactor is Zn(2+).

It localises to the cytoplasm. The enzyme catalyses tRNA(Cys) + L-cysteine + ATP = L-cysteinyl-tRNA(Cys) + AMP + diphosphate. The polypeptide is Cysteine--tRNA ligase (Aster yellows witches'-broom phytoplasma (strain AYWB)).